Consider the following 610-residue polypeptide: MSDQFDAKAFLKTVTSQPGVYRMYDAGGTVIYVGKAKDLKKRLSSYFRSNLASRKTEALVAQIQQIDVTVTHTETEALLLEHNYIKLYQPRYNVLLRDDKSYPFIFLSGDTHPRLAMHRGAKHAKGEYFGPFPNGYAVRETLALLQKIFPIRQCENSVYRNRSRPCLQYQIGRCLGPCVEGLVSEEEYAQQVEYVRLFLSGKDDQVLTQLISRMETASQNLEFEEAARIRDQIQAVRRVTEKQFVSNTGDDLDVIGVAFDAGMACVHVLFIRQGKVLGSRSYFPKVPGSTELSEVVETFVGQFYLQGSQMRTLPGEILLDFNLSDKTLLADSLSELAGRKINVQTKPRGDRARYLKLARTNAATALTSKLSQQSTVHQRLTALASVLKLPEVKRMECFDISHTMGEQTVASCVVFDANGPLRAEYRRYNITGITPGDDYAAMNQVLRRRYGKAIDDSKIPDVILIDGGKGQLAQAKNVFAELDVSWDKNHPLLLGVAKGADRKAGLETLFFEPEGEGFSLPPDSPALHVIQHIRDESHDHAIGGHRKKRAKVKNTSSLETIEGIGPKRRQMLLKYMGGLQGLRNASVEEIAKVPGISQGLAEKIFWSLKH.

The 79-residue stretch at 16-94 (SQPGVYRMYD…IKLYQPRYNV (79 aa)) folds into the GIY-YIG domain. One can recognise a UVR domain in the interval 204 to 239 (DQVLTQLISRMETASQNLEFEEAARIRDQIQAVRRV).

This sequence belongs to the UvrC family. In terms of assembly, interacts with UvrB in an incision complex.

It localises to the cytoplasm. Its function is as follows. The UvrABC repair system catalyzes the recognition and processing of DNA lesions. UvrC both incises the 5' and 3' sides of the lesion. The N-terminal half is responsible for the 3' incision and the C-terminal half is responsible for the 5' incision. The protein is UvrABC system protein C of Escherichia coli O1:K1 / APEC.